The chain runs to 357 residues: uncharacterized protein (357 aa).

This is an uncharacterized protein from Caenorhabditis elegans.